We begin with the raw amino-acid sequence, 235 residues long: Small ribosomal subunit protein uS3 (235 aa).

Residues 39 to 107 (VRLFLRKELF…PTQINIAEIR (69 aa)) form the KH type-2 domain.

Belongs to the universal ribosomal protein uS3 family. In terms of assembly, part of the 30S ribosomal subunit. Forms a tight complex with proteins S10 and S14.

Functionally, binds the lower part of the 30S subunit head. Binds mRNA in the 70S ribosome, positioning it for translation. This Buchnera aphidicola subsp. Baizongia pistaciae (strain Bp) protein is Small ribosomal subunit protein uS3.